A 2211-amino-acid polypeptide reads, in one-letter code: Norsolorinic acid synthase stcA (2211 aa).

The starter unit:ACP transacylase (SAT) domain stretch occupies residues F11 to H251. The disordered stretch occupies residues P358–S378. Residues T368 to S378 show a composition bias toward basic and acidic residues. Positions R380–D812 constitute a Ketosynthase family 3 (KS3) domain. Catalysis depends on for beta-ketoacyl synthase activity residues C552, H687, and H730. The tract at residues I912–D1201 is malonyl-CoA:ACP transacylase (MAT) domain. Residue S1004 is the For acyl/malonyl transferase activity of the active site. The disordered stretch occupies residues T1289 to A1316. The tract at residues H1327 to Q1468 is N-terminal hotdog fold. Residues H1327–R1643 form the PKS/mFAS DH domain. The tract at residues T1340–R1643 is product template (PT) domain. The Proton acceptor; for dehydratase activity role is filled by H1359. The interval F1495–R1643 is C-terminal hotdog fold. Catalysis depends on D1555, which acts as the Proton donor; for dehydratase activity. The tract at residues R1655–A1706 is disordered. Composition is skewed to polar residues over residues G1658–P1668 and K1676–H1685. 2 consecutive Carrier domains span residues R1712–A1791 and D1839–S1915. 2 positions are modified to O-(pantetheine 4'-phosphoryl)serine: S1749 and S1873. Over residues G1912 to S1926 the composition is skewed to low complexity. Residues G1912–R1947 are disordered. The span at I1934–D1945 shows a compositional bias: polar residues. Residues I1969–L2205 are thioesterase/Claisen cyclase (TE/CLC) domain. The active-site For thioesterase activity is the S2039.

The cofactor is pantetheine 4'-phosphate.

The enzyme catalyses hexanoyl-[ACP] + 7 malonyl-CoA + 6 H(+) = noranthrone + holo-[ACP] + 7 CO2 + 7 CoA + 2 H2O. Its pathway is mycotoxin biosynthesis; sterigmatocystin biosynthesis. In terms of biological role, non-reducing polyketide synthase; part of the gene cluster that mediates the biosynthesis of sterigmatocystin (ST), a polyketide-derived furanocoumarin which is part of the most toxic and carcinogenic compounds among the known mycotoxins. The first step in the biosynthesis of sterigmatocystin is the production of hexanoate by the fatty acid synthase (FAS) units stcJ and stcK. The polyketide backbone is assembled by the non-reducing polyketide synthase stcA by condensation of the starter hexanoyl-CoA and 7 malonyl-CoA extender units followed by cyclization and release of norsolorinic acid. Norsolorinic acid is the first stable intermediate in the biosynthesis of sterigmatocystin and is converted into averantin (AVN) by the ketoreductase stcE which reduces the hexanoate ketone to an alcohol. Averantin is then oxidized into 5'-hydroxyaverantin (HAVN) by the cytochrome P450 monooxygenase stcF. 5'-hydroxyaverantin is further converted to 5'-oxyaverantin (OAVN) by the 5'-hydroxyaverantin dehydrogenase stcG. The next step is the conversion of OAVN into averufin (AVF) which is catalyzed by a yet to be identified enzyme. The cytochrome P450 monooxygenase stcB and the flavin-binding monooxygenase stcW are both required for the conversion of averufin to 1-hydroxyversicolorone. The esterase stcI probably catalyzes the formation of versiconal hemiacetal acetate from 1-hydroxyversicolorone. The oxydoreductase stcN then probably catalyzes the biosynthetic step from versiconal to versicolorin B (VERB). The next step is performed by the versicolorin B desaturase stcL to produce versicolorin A (VERA). The ketoreductase stcU and the cytochrome P450 monooxygenase stcS are involved in the conversion of versicolorin A to demethylsterigmatocystin. The Baeyer-Villiger oxidas stcQ and the reductase stcR might be involved in the biosynthetic step from versicolorin A to demethylsterigmatocystin. The final step in the biosynthesis of sterigmatocystin is the methylation of demethylsterigmatocystin catalyzed by the methyltransferase stcP. In Emericella nidulans (strain FGSC A4 / ATCC 38163 / CBS 112.46 / NRRL 194 / M139) (Aspergillus nidulans), this protein is Norsolorinic acid synthase stcA.